Reading from the N-terminus, the 137-residue chain is Large ribosomal subunit protein uL16 (137 aa).

The protein belongs to the universal ribosomal protein uL16 family. In terms of assembly, part of the 50S ribosomal subunit.

Its function is as follows. Binds 23S rRNA and is also seen to make contacts with the A and possibly P site tRNAs. In Streptococcus thermophilus (strain CNRZ 1066), this protein is Large ribosomal subunit protein uL16.